We begin with the raw amino-acid sequence, 178 residues long: Fatty-acid and retinol-binding protein 1 (178 aa).

Residues 1–16 (MYHQLILMALIGVIMA) form the signal peptide. 2 N-linked (GlcNAc...) asparagine glycosylation sites follow: asparagine 44 and asparagine 75. Coiled-coil stretches lie at residues 67–89 (DAAL…ELRN) and 123–154 (KLDM…LKAT). The N-linked (GlcNAc...) asparagine glycan is linked to asparagine 157.

The protein belongs to the fatty-acid and retinol-binding protein (FARBP) family. Post-translationally, N-glycosylated.

It is found in the secreted. Binds retinol and different fatty acids. This chain is Fatty-acid and retinol-binding protein 1, found in Onchocerca gutturosa.